The primary structure comprises 470 residues: MKIYNTLTKAKEEFIPLQEGKVSMYVCGPTVYNYIHIGNARPVVVFDTVRRYLEYKGYDVNFVSNFTDVDDKIIKKANEEGVSAHEISERYIKEYLKDTEALNVLPVTTRPKATEEIDGMIDMIEELIEKGHAYEKNGTVYFKTRSFKQYGKLSKKNIDDLEAGARIAVADEKDDPMDFVLWKPKKVGEPAWSAPWCDGRPGWHIECSVMSKKYLGDQIDIHAGGEDLIFPHHENEIAQTECCTGKEFAKYWMHNGFLNVDNKKMSKSEGNFFTVREIFAEYAPAVLRFFLLSVNYRSPINFSRDIIESSKNGLERIQTAVEQLHFLAKVKAEKGELSTELTESESTLLKEFDALIKKFEDAMDDDFNTADAISSIFEMVKLSNTYVTVESSVEMIQKVLSNITTFCDILGLETEKKAEILDEEIEQLIADRQSARKAKDFAKSDEIRNLLLEKGIILEDTREGVKWKRA.

Cys-27 is a Zn(2+) binding site. The 'HIGH' region signature appears at 29 to 39; it reads PTVYNYIHIGN. 3 residues coordinate Zn(2+): Cys-207, His-232, and Glu-236. A 'KMSKS' region motif is present at residues 264–268; that stretch reads KMSKS. Position 267 (Lys-267) interacts with ATP.

This sequence belongs to the class-I aminoacyl-tRNA synthetase family. Monomer. It depends on Zn(2+) as a cofactor.

It is found in the cytoplasm. The catalysed reaction is tRNA(Cys) + L-cysteine + ATP = L-cysteinyl-tRNA(Cys) + AMP + diphosphate. This chain is Cysteine--tRNA ligase, found in Lachnoclostridium phytofermentans (strain ATCC 700394 / DSM 18823 / ISDg) (Clostridium phytofermentans).